The chain runs to 520 residues: Non-specific phospholipase C6 (520 aa).

An N-terminal signal peptide occupies residues 1-31 (MKPSSASRFSLTFSHFLTLYCLLTQTHVAQG).

Belongs to the bacterial phospholipase C family. As to expression, expressed in roots, leaves, stems, flowers and siliques.

The protein localises to the secreted. The chain is Non-specific phospholipase C6 (NPC6) from Arabidopsis thaliana (Mouse-ear cress).